A 723-amino-acid chain; its full sequence is MATLEEEFTLSTGVLGAGPEGFLGVEQTDKADQFLVTDSGRTVVLYKVSDQKPLGSWSVKQGQSITCPAVCNFQTGEYIMVHDHKVLRIWNNDDVNVDKVFKATLSAEVHRIHSVQRTEPLVLFRGGAARGLEALLVEPQQNIESVIPDEEVIVWSEVFMLFKQPVLIFITENHGHYYAYVRLCKSHSLSKYTLLLEKEEKSVKPNFTARVDGKFISLVSLSSDGCIYETLIPIYSSDTEQNQRLVRALMLKSVVSGGVRNGVALTILDQDHIAVLGPPLSASKECLSIWNIKFQTLQTSKELPQGTSGQLWYHGEVLFMLHGKSLTVIPYKCEESSLAGALGKLKHTQESGTHSVPHFVNWETCSGYELGSSGAEQSRTLRRKKVETNLQPEVPGFKQLLSIIKKDSEKHIEVELRKFLAKSTPAFHTIIGDLVAGLVGRCKAEPSFYPRNCLTQLIQTHVLSYSLCPDLMEIALEHTDVQMLQLCLQQFPDIPESTTCACLKLFLSVGDDCLRDSNINMESVFDYSDSTQDEKKEMEEQIEIVQNGFGPEDGNCSEDSQQLNDKPADTAHEPGSFPVTSCPVAPKRAALLNAVLHSAYSEPFLLPHLKDIPAKHVTLFLQYLYFLYLKCTGSATMTLPGVNPPTVSQIMDWICLLLDANFTVLLMIPEAKRLLLILYNFVKSQISIYSELNKIAVSFRELQRLNREKSSRGLYSIEVLELF.

Lysine 346 is subject to N6-methyllysine. Residues 549–572 are disordered; it reads FGPEDGNCSEDSQQLNDKPADTAH.

Interacts with UTP4. Interacts with FBL/fibrillarin in a transcription-dependent manner. May associate with the proposed t-UTP subcomplex of the SSU processome containing at least UTP4, WDR43, HEATR1, UTP15, WDR75.

It localises to the nucleus. The protein localises to the nucleolus. In terms of biological role, ribosome biogenesis factor. May be required for both optimal rDNA transcription and small subunit (SSU) pre-rRNA processing at sites A', A0, 1 and 2b. This Mus musculus (Mouse) protein is Nucleolar protein 11 (Nol11).